The chain runs to 125 residues: uncharacterized protein (125 aa).

A helical transmembrane segment spans residues 100 to 120 (YFKVAFALAVLTPLAIWIFYI).

The protein localises to the membrane. This is an uncharacterized protein from Saccharomyces cerevisiae (strain ATCC 204508 / S288c) (Baker's yeast).